Here is a 1432-residue protein sequence, read N- to C-terminus: uncharacterized protein (1432 aa).

9 disordered regions span residues 1–72, 208–237, 280–335, 531–607, 690–712, 738–801, 896–950, 1044–1076, and 1303–1359; these read MDTI…NYYN, NKIE…NNGQ, ERNE…ENNL, IVKS…NNSS, QNKS…TTTT, NNTL…NGGR, QSNN…SPPT, NINS…NNNN, and NNNN…NTTP. 3 stretches are compositionally biased toward low complexity: residues 14-72, 208-225, and 284-300; these read INNN…NYYN, NKIE…NNEN, and LTSP…LPSS. Residues 315–325 show a composition bias toward acidic residues; it reads QEEEEEEEEED. 5 stretches are compositionally biased toward low complexity: residues 536 to 575, 583 to 607, 691 to 712, 744 to 779, and 896 to 944; these read SSSN…NKNK, DNNT…NNSS, NKSP…TTTT, NMNN…NSNN, and QSNN…SSSN. Residues 1311 to 1320 are compositionally biased toward gly residues; it reads NGNGNGGING. Residues 1321–1333 are compositionally biased toward low complexity; the sequence is NNGNNSGSNNKEN. A compositionally biased stretch (gly residues) spans 1334–1346; the sequence is GGTGAGIGGGGGL. The segment covering 1347–1359 has biased composition (low complexity); the sequence is QLPNNNNNNNTTP.

This is an uncharacterized protein from Dictyostelium discoideum (Social amoeba).